The primary structure comprises 184 residues: Type-1 fimbrial protein, A chain (184 aa).

Positions methionine 1–alanine 23 are cleaved as a signal peptide. Cysteine 46 and cysteine 86 are oxidised to a cystine.

It belongs to the fimbrial protein family.

It localises to the fimbrium. In terms of biological role, fimbriae (also called pili), polar filaments radiating from the surface of the bacterium to a length of 0.5-1.5 micrometers and numbering 100-300 per cell, enable bacteria to colonize the epithelium of specific host organs. The sequence is that of Type-1 fimbrial protein, A chain from Escherichia coli.